A 474-amino-acid chain; its full sequence is PRAME family member 13 (474 aa).

The stretch at 97-124 is one LRR 1; degenerate repeat; sequence RRKLQVLDLRDVDENFWARWPGAWALSC. An LRR 2; degenerate repeat occupies 179–203; the sequence is HLCCSKLVNYLTPIKHLRKSLKIIY. An LRR 3; degenerate repeat occupies 204 to 230; the sequence is LNSIQELEIHNMSWPRLIRKLRCYLKE. The stretch at 231 to 265 is one LRR 4; degenerate repeat; it reads MKTLGKLVFSRCHHSTSDNELEGRLVTKFSSVFLG. LRR repeat units follow at residues 266–291, 292–323, 324–342, 348–375, and 376–400; these read LEHLQLLKIKLITFFSGHLEQLIRCL, QNPLENLELTYGYLLEEDVKCLSQYPSLGYLK, HLNLSYVLLFRISLEPLGA, AASLETLILEGCQIHYSQLSAILPGLSR, and CSQLTTFYFGRNCMSMGALKDLLRH.

The protein belongs to the PRAME family.

This is PRAME family member 13 from Homo sapiens (Human).